A 402-amino-acid chain; its full sequence is 4-hydroxy-3-methylbut-2-en-1-yl diphosphate synthase (ferredoxin) (402 aa).

[4Fe-4S] cluster contacts are provided by cysteine 311, cysteine 314, cysteine 345, and glutamate 352.

It belongs to the IspG family. It depends on [4Fe-4S] cluster as a cofactor.

It catalyses the reaction (2E)-4-hydroxy-3-methylbut-2-enyl diphosphate + 2 oxidized [2Fe-2S]-[ferredoxin] + H2O = 2-C-methyl-D-erythritol 2,4-cyclic diphosphate + 2 reduced [2Fe-2S]-[ferredoxin] + H(+). The protein operates within isoprenoid biosynthesis; isopentenyl diphosphate biosynthesis via DXP pathway; isopentenyl diphosphate from 1-deoxy-D-xylulose 5-phosphate: step 5/6. Converts 2C-methyl-D-erythritol 2,4-cyclodiphosphate (ME-2,4cPP) into 1-hydroxy-2-methyl-2-(E)-butenyl 4-diphosphate, using ferredoxin I (PetF) as the reducing agent. In Thermosynechococcus vestitus (strain NIES-2133 / IAM M-273 / BP-1), this protein is 4-hydroxy-3-methylbut-2-en-1-yl diphosphate synthase (ferredoxin).